The sequence spans 643 residues: 1-deoxy-D-xylulose-5-phosphate synthase (643 aa).

Residues H78 and 119-121 contribute to the thiamine diphosphate site; that span reads AHS. D150 is a binding site for Mg(2+). Residues 151-152, N179, Y288, and E370 contribute to the thiamine diphosphate site; that span reads GS. N179 is a binding site for Mg(2+).

This sequence belongs to the transketolase family. DXPS subfamily. Homodimer. Mg(2+) is required as a cofactor. The cofactor is thiamine diphosphate.

The catalysed reaction is D-glyceraldehyde 3-phosphate + pyruvate + H(+) = 1-deoxy-D-xylulose 5-phosphate + CO2. Its pathway is metabolic intermediate biosynthesis; 1-deoxy-D-xylulose 5-phosphate biosynthesis; 1-deoxy-D-xylulose 5-phosphate from D-glyceraldehyde 3-phosphate and pyruvate: step 1/1. In terms of biological role, catalyzes the acyloin condensation reaction between C atoms 2 and 3 of pyruvate and glyceraldehyde 3-phosphate to yield 1-deoxy-D-xylulose-5-phosphate (DXP). In Brucella suis (strain ATCC 23445 / NCTC 10510), this protein is 1-deoxy-D-xylulose-5-phosphate synthase.